Consider the following 764-residue polypeptide: Complement factor B (764 aa).

The signal sequence occupies residues 1-25 (MGSNLSPQLCLMPFILGLLSGGVTT). Sushi domains lie at 35–100 (GSCS…ECRA), 101–160 (IHCP…ICDN), and 163–220 (GYCS…SCQD). 6 disulfide bridges follow: Cys37–Cys76, Cys62–Cys98, Cys103–Cys145, Cys131–Cys158, Cys165–Cys205, and Cys191–Cys218. N-linked (GlcNAc...) asparagine glycans are attached at residues Asn122 and Asn142. The 200-residue stretch at 270–469 (NIYLVLDGSD…NLEDVFFQMI (200 aa)) folds into the VWFA domain. The Mg(2+) site is built by Ser278 and Ser280. A glycan (N-linked (GlcNAc...) asparagine) is linked at Asn285. Residue Thr353 participates in Mg(2+) binding. N-linked (GlcNAc...) asparagine glycosylation is present at Asn378. The 281-residue stretch at 477-757 (LCGMVWEHRK…VLPWLKQKLQ (281 aa)) folds into the Peptidase S1 domain. Disulfide bonds link Cys478/Cys596, Cys511/Cys527, Cys599/Cys615, Cys656/Cys682, and Cys695/Cys725. Residues His526 and Asp576 each act as charge relay system in the active site. Ser699 (charge relay system) is an active-site residue.

Belongs to the peptidase S1 family. Monomer. Interacts with complement C3b; this interaction is dependent on the presence of Mg(2+). As to quaternary structure, catalytic component of the C3 convertase of the alternative complement pathway, also named C3bBb, composed of complement factor B Bb and complement C3b. Catalytic component of the C5 convertase of the alternative complement pathway, also named C3bBb3b, composed of complement factor B Bb and additional molecules of complement C3b. Interacts to CFP; this interaction contributes to the stabilization of the active C3-convertase enzyme complex. Mg(2+) serves as cofactor. The cofactor is Mn(2+). Post-translationally, cleaved by CFD following activation of the alternative complement system, generating Ba and Bb chains. Cleavage and activation takes place when CFB is already associated with complement C3b.

It is found in the secreted. The protein localises to the cell surface. The enzyme catalyses Cleavage of Arg-|-Ser bond in complement component C3 alpha-chain to yield C3a and C3b, and Arg-|-Xaa bond in complement component C5 alpha-chain to yield C5a and C5b.. Precursor of the catalytic component of the C3 and C5 convertase complexes of the alternative pathway of the complement system, a cascade of proteins that leads to phagocytosis and breakdown of pathogens and signaling that strengthens the adaptive immune system. The alternative complement pathway acts as an amplification loop that enhances other complement pathways (classical, lectin and GZMK) by promoting formation of additional C3 and C5 convertases. CFB is cleaved and activated by CFD to generate Ba and Bb chains; Bb chain constituting the catalytic component of the C3 and C5 convertases. Functionally, serine protease component of the complement C3 and C5 convertase complexes of the alternative complement pathway. Following cleavage and activation by factor D (CFD), forms the C3 convertase together with complement C3b. As part of the C3 convertase, cleaves and activates C3 into C3a anaphylatoxin and C3b opsonin, the next components of the complement pathways. When an additional complement C3b molecule binds to the C3 convertase, forms the C5 convertase, which cleaves and activates C5 into C5a anaphylatoxin and C5b component of the membrane attack complex. In terms of biological role, involved in proliferation and differentiation of preactivated B-lymphocytes, rapid spreading of peripheral blood monocytes, stimulation of lymphocyte blastogenesis and lysis of erythrocytes. The sequence is that of Complement factor B (CFB) from Pongo pygmaeus (Bornean orangutan).